A 258-amino-acid chain; its full sequence is Regulatory protein RecX (258 aa).

This sequence belongs to the RecX family.

The protein resides in the cytoplasm. Functionally, modulates RecA activity. This Streptococcus agalactiae serotype Ia (strain ATCC 27591 / A909 / CDC SS700) protein is Regulatory protein RecX.